The sequence spans 164 residues: S-ribosylhomocysteine lyase (164 aa).

Fe cation is bound by residues His54, His58, and Cys128.

It belongs to the LuxS family. As to quaternary structure, homodimer. Requires Fe cation as cofactor.

It catalyses the reaction S-(5-deoxy-D-ribos-5-yl)-L-homocysteine = (S)-4,5-dihydroxypentane-2,3-dione + L-homocysteine. Involved in the synthesis of autoinducer 2 (AI-2) which is secreted by bacteria and is used to communicate both the cell density and the metabolic potential of the environment. The regulation of gene expression in response to changes in cell density is called quorum sensing. Catalyzes the transformation of S-ribosylhomocysteine (RHC) to homocysteine (HC) and 4,5-dihydroxy-2,3-pentadione (DPD). The sequence is that of S-ribosylhomocysteine lyase from Campylobacter jejuni subsp. jejuni serotype O:23/36 (strain 81-176).